Here is a 765-residue protein sequence, read N- to C-terminus: Protein PAT1 homolog 1 (765 aa).

Disordered regions lie at residues 1–98 (MFRF…DERG), 119–147 (GVGS…LAGP), and 210–244 (LPNR…SPPV). Residues 7–30 (LDDDCTLEEEEGLVEEEDEIDQFN) show a composition bias toward acidic residues. Residues 45-59 (EEHTRLAELDERVRD) are compositionally biased toward basic and acidic residues. Residues 218–227 (SRDEGRDLSE) are compositionally biased toward basic and acidic residues. Phosphoserine occurs at positions 235 and 236. The span at 235 to 244 (SSPVIGSPPV) shows a compositional bias: low complexity.

The protein belongs to the PAT1 family. As to quaternary structure, interacts with ribonucleoprotein complex components.

Its subcellular location is the cytoplasm. It localises to the P-body. The protein localises to the nucleus. The protein resides in the PML body. It is found in the nucleus speckle. In terms of biological role, RNA-binding protein involved in deadenylation-dependent decapping of mRNAs, leading to the degradation of mRNAs. Acts as a scaffold protein that connects deadenylation and decapping machinery. Required for cytoplasmic mRNA processing body (P-body) assembly. The protein is Protein PAT1 homolog 1 (patl1) of Danio rerio (Zebrafish).